The chain runs to 587 residues: Glutathione hydrolase proenzyme (587 aa).

Positions 1 to 28 (MKRTWNVCLTALLSVLLVAGSVPFHAEA) are cleaved as a signal peptide. The propeptide occupies 29-35 (KKPPKSY). An L-glutamate-binding site is contributed by arginine 113. The active-site Nucleophile is threonine 403. Residues threonine 421, glutamate 423, glutamate 442, aspartate 445, 464–465 (SS), and 485–486 (GG) each bind L-glutamate.

The protein belongs to the gamma-glutamyltransferase family. In terms of assembly, this enzyme consists of two polypeptide chains, which are synthesized in precursor form from a single polypeptide. Post-translationally, cleaved by autocatalysis into a large and small subunit.

It localises to the secreted. It catalyses the reaction an N-terminal (5-L-glutamyl)-[peptide] + an alpha-amino acid = 5-L-glutamyl amino acid + an N-terminal L-alpha-aminoacyl-[peptide]. It carries out the reaction glutathione + H2O = L-cysteinylglycine + L-glutamate. The catalysed reaction is an S-substituted glutathione + H2O = an S-substituted L-cysteinylglycine + L-glutamate. It functions in the pathway sulfur metabolism; glutathione metabolism. Its activity is regulated as follows. Inhibited by glucose. Cleaves the gamma-glutamyl bond of extracellular glutathione (gamma-Glu-Cys-Gly), glutathione conjugates, and other gamma-glutamyl compounds. The metabolism of glutathione releases free glutamate and the dipeptide cysteinyl-glycine, which is hydrolyzed to cysteine and glycine by dipeptidases. Uses glutamine as a gamma-glutamyl donor and acceptor for gamma-polyglutamic acid synthesis. Dipeptides are better gamma-glutamyl acceptors than free amino acids. The sequence is that of Glutathione hydrolase proenzyme (ggt) from Bacillus subtilis subsp. natto.